The following is a 593-amino-acid chain: Calnexin (593 aa).

Positions 1–20 are cleaved as a signal peptide; the sequence is MEGKWLLCMLLVLGTTIVQA. The Lumenal segment spans residues 21–482; the sequence is HEGHDDDMID…QMIEAAEERP (462 aa). Ca(2+) is bound by residues Ser-75 and Asp-118. N6-acetyllysine is present on Lys-138. An intrachain disulfide couples Cys-161 to Cys-195. Positions 165, 167, 186, and 193 each coordinate an alpha-D-glucoside. Residues 261 to 346 are disordered; sequence GNLLNDMTPP…AEKPEDWDED (86 aa). The tract at residues 277 to 410 is p domain (Extended arm); that stretch reads IEDPEDQKPE…RKIPNPDFFE (134 aa). Repeat copies occupy residues 279–290, 296–307, 315–326, 334–345, and 349–359. 4 X approximate repeats regions lie at residues 279 to 345 and 349 to 406; these read DPED…DWDE and GEWE…IPNP. Positions 282–320 are enriched in basic and acidic residues; it reads DQKPEDWDERPKIPDPDAVKPDDWNEDAPAKIPDEEATK. Acidic residues predominate over residues 324-346; sequence WLDDEPEYVPDPDAEKPEDWDED. Residues 327-360 are interaction with PPIB; the sequence is DEPEYVPDPDAEKPEDWDEDMDGEWEAPQIANPK. A disulfide bridge links Cys-361 with Cys-367. Tandem repeats lie at residues 368-378, 382-392, and 396-406. Residue Glu-426 coordinates an alpha-D-glucoside. Ca(2+) is bound at residue Asp-437. The helical transmembrane segment at 483 to 503 threads the bilayer; sequence WLWVVYVLTVALPVFLVILFC. S-palmitoyl cysteine attachment occurs at residues Cys-503 and Cys-504. The Cytoplasmic segment spans residues 504–593; that stretch reads CSGKKQSSPV…SPRNRKPRRE (90 aa). The sufficient to mediate interaction with SGIP1 stretch occupies residues 504 to 593; sequence CSGKKQSSPV…SPRNRKPRRE (90 aa). A disordered region spans residues 511 to 593; the sequence is SPVEYKKTDA…SPRNRKPRRE (83 aa). Residues 526–548 show a composition bias toward acidic residues; the sequence is KEEEEEKEEEKDKGDEEEEGEEK. A Phosphoserine modification is found at Ser-555. Phosphothreonine is present on Thr-563. Ser-565 is subject to Phosphoserine; by MAPK3. Ser-584 bears the Phosphoserine mark.

Belongs to the calreticulin family. As to quaternary structure, interacts with MAPK3/ERK1. Interacts with KCNH2. Associates with ribosomes. Interacts with SGIP1; involved in negative regulation of endocytosis. The palmitoylated form interacts with the ribosome-translocon complex component SSR1, promoting efficient folding of glycoproteins. Interacts with SERPINA2P/SERPINA2 and with the S and Z variants of SERPINA1. Interacts with PPIB. Interacts with ZNRF4. Interacts with SMIM22. Interacts with TMX2. Interacts with TMEM35A/NACHO and CHRNA7. Interacts with reticulophagy regulators RETREG2 and RETREG3. Interacts with DNM1L; may form part of a larger protein complex at the ER-mitochondrial interface during mitochondrial fission. Interacts with ADAM7. In terms of processing, phosphorylated at Ser-565 by MAPK3/ERK1. Phosphorylation by MAPK3/ERK1 increases its association with ribosomes. Post-translationally, palmitoylation by DHHC6 leads to the preferential localization to the perinuclear rough ER. It mediates the association of calnexin with the ribosome-translocon complex (RTC) which is required for efficient folding of glycosylated proteins. Ubiquitinated, leading to proteasomal degradation. Probably ubiquitinated by ZNRF4.

The protein resides in the endoplasmic reticulum membrane. It localises to the mitochondrion membrane. The protein localises to the melanosome membrane. Calcium-binding protein that interacts with newly synthesized monoglucosylated glycoproteins in the endoplasmic reticulum. It may act in assisting protein assembly and/or in the retention within the ER of unassembled protein subunits. It seems to play a major role in the quality control apparatus of the ER by the retention of incorrectly folded proteins. Associated with partial T-cell antigen receptor complexes that escape the ER of immature thymocytes, it may function as a signaling complex regulating thymocyte maturation. Additionally it may play a role in receptor-mediated endocytosis at the synapse. The polypeptide is Calnexin (CANX) (Canis lupus familiaris (Dog)).